A 125-amino-acid polypeptide reads, in one-letter code: Large-conductance mechanosensitive channel (125 aa).

Helical transmembrane passes span 15-35 and 67-87; these read MDLA…NSLV and GSFL…FFLI.

It belongs to the MscL family. As to quaternary structure, homopentamer.

It is found in the cell membrane. Channel that opens in response to stretch forces in the membrane lipid bilayer. May participate in the regulation of osmotic pressure changes within the cell. This Lactobacillus gasseri (strain ATCC 33323 / DSM 20243 / BCRC 14619 / CIP 102991 / JCM 1131 / KCTC 3163 / NCIMB 11718 / NCTC 13722 / AM63) protein is Large-conductance mechanosensitive channel.